The chain runs to 268 residues: tRNA pseudouridine synthase A (268 aa).

The active-site Nucleophile is the Asp52. Substrate is bound at residue Tyr110.

The protein belongs to the tRNA pseudouridine synthase TruA family. Homodimer.

It carries out the reaction uridine(38/39/40) in tRNA = pseudouridine(38/39/40) in tRNA. Functionally, formation of pseudouridine at positions 38, 39 and 40 in the anticodon stem and loop of transfer RNAs. The sequence is that of tRNA pseudouridine synthase A from Prochlorococcus marinus (strain MIT 9312).